The following is a 255-amino-acid chain: Mediator of RNA polymerase II transcription subunit 18 (255 aa).

Belongs to the Mediator complex subunit 18 family. As to quaternary structure, component of the Mediator complex.

The protein localises to the nucleus. Functionally, component of the Mediator complex, a coactivator involved in the regulated transcription of nearly all RNA polymerase II-dependent genes. Mediator functions as a bridge to convey information from gene-specific regulatory proteins to the basal RNA polymerase II transcription machinery. Mediator is recruited to promoters by direct interactions with regulatory proteins and serves as a scaffold for the assembly of a functional preinitiation complex with RNA polymerase II and the general transcription factors. The protein is Mediator of RNA polymerase II transcription subunit 18 (SRB5) of Kluyveromyces lactis (strain ATCC 8585 / CBS 2359 / DSM 70799 / NBRC 1267 / NRRL Y-1140 / WM37) (Yeast).